Here is a 259-residue protein sequence, read N- to C-terminus: GDP-perosamine N-formyltransferase (259 aa).

(6S)-5,6,7,8-tetrahydrofolate is bound by residues 89-91 (SLI) and 139-143 (DENFD).

The protein belongs to the Fmt family. As to quaternary structure, homodimer.

It catalyses the reaction GDP-alpha-D-perosamine + (6R)-10-formyltetrahydrofolate = GDP-N-formyl-alpha-D-perosamine + (6S)-5,6,7,8-tetrahydrofolate + H(+). It functions in the pathway bacterial outer membrane biogenesis; lipopolysaccharide biosynthesis. Functionally, involved in the lipopolysaccharide (LPS) O-antigen biosynthesis. Catalyzes the transfer of a formyl group to GDP-perosamine, leading to the formation of GDP-N-formylperosamine. Is critical for full bacterial virulence. The protein is GDP-perosamine N-formyltransferase of Brucella abortus (strain 2308).